The chain runs to 141 residues: High mobility group B protein 3 (141 aa).

Basic and acidic residues-rich tracts occupy residues 1–12 and 70–110; these read MKGAKSKAETRS and GGEK…LEEG. Disordered regions lie at residues 1 to 40 and 54 to 141; these read MKGA…RPSS and KEEH…EDDD. Residues 35-104 constitute a DNA-binding region (HMG box); the sequence is PKRPSSAFFV…EYEKNMKAYN (70 aa). Phosphoserine is present on S122. The span at 124–141 shows a compositional bias: acidic residues; it reads VNDEDDAEDGSEEEEDDD.

The protein belongs to the HMGB family. As to expression, expressed in lateral roots, root tips, stems, cotyledons, leaves and flowers (excluding ovary and pedicels).

Its subcellular location is the nucleus. The protein resides in the cytoplasm. It localises to the cytosol. Functionally, binds preferentially double-stranded DNA. The sequence is that of High mobility group B protein 3 (HMGB3) from Arabidopsis thaliana (Mouse-ear cress).